Consider the following 538-residue polypeptide: 2-isopropylmalate synthase (538 aa).

A Pyruvate carboxyltransferase domain is found at 6-277 (LIIFDTTLRD…DSTVPLSTID (272 aa)). Mn(2+) contacts are provided by D15, H206, H208, and N242. The regulatory domain stretch occupies residues 406–538 (RLEQVQVSCG…AHPDAAAQKL (133 aa)).

Belongs to the alpha-IPM synthase/homocitrate synthase family. LeuA type 1 subfamily. Homodimer. Mn(2+) is required as a cofactor.

It is found in the cytoplasm. The catalysed reaction is 3-methyl-2-oxobutanoate + acetyl-CoA + H2O = (2S)-2-isopropylmalate + CoA + H(+). The protein operates within amino-acid biosynthesis; L-leucine biosynthesis; L-leucine from 3-methyl-2-oxobutanoate: step 1/4. Catalyzes the condensation of the acetyl group of acetyl-CoA with 3-methyl-2-oxobutanoate (2-ketoisovalerate) to form 3-carboxy-3-hydroxy-4-methylpentanoate (2-isopropylmalate). The sequence is that of 2-isopropylmalate synthase from Gloeobacter violaceus (strain ATCC 29082 / PCC 7421).